The following is a 1028-amino-acid chain: Pentatricopeptide repeat-containing protein At3g09040, mitochondrial (1028 aa).

A mitochondrion-targeting transit peptide spans 1–30 (MYFRVLLTPSSAMFDSFSFVRRLSYSPDLG). PPR repeat units lie at residues 94 to 123 (EGRLGNAIVDLYAKCAQVSYAEKQFDFLEK), 124 to 158 (DVTAWNSMLSMYSSIGKPGKVLRSFVSLFENQIFP), 159 to 193 (NKFTFSIVLSTCARETNVEFGRQIHCSMIKMGLER), 194 to 224 (NSYCGGALVDMYAKCDRISDARRVFEWIVDP), 225 to 259 (NTVCWTCLFSGYVKAGLPEEAVLVFERMRDEGHRP), 260 to 290 (DHLAFVTVINTYIRLGKLKDARLLFGEMSSP), 291 to 325 (DVVAWNVMISGHGKRGCETVAIEYFFNMRKSSVKS), 326 to 360 (TRSTLGSVLSAIGIVANLDLGLVVHAEAIKLGLAS), 361 to 391 (NIYVGSSLVSMYSKCEKMEAAAKVFEALEEK), 392 to 426 (NDVFWNAMIRGYAHNGESHKVMELFMDMKSSGYNI), 427 to 461 (DDFTFTSLLSTCAASHDLEMGSQFHSIIIKKKLAK), 462 to 492 (NLFVGNALVDMYAKCGALEDARQIFERMCDR), 493 to 527 (DNVTWNTIIGSYVQDENESEAFDLFKRMNLCGIVS), 528 to 562 (DGACLASTLKACTHVHGLYQGKQVHCLSVKCGLDR), 563 to 593 (DLHTGSSLIDMYSKCGIIKDARKVFSSLPEW), 594 to 627 (SVVSMNALIAGYSQNNLEEAVVLFQEMLTRGVNP), 628 to 662 (SEITFATIVEACHKPESLTLGTQFHGQITKRGFSS), 664 to 694 (GEYLGISLLGMYMNSRGMTEACALFSELSSP), 696 to 730 (SIVLWTGMMSGHSQNGFYEEALKFYKEMRHDGVLP), 731 to 765 (DQATFVTVLRVCSVLSSLREGRAIHSLIFHLAHDL), 766 to 796 (DELTSNTLIDMYAKCGDMKGSSQVFDEMRRR), 798 to 832 (NVVSWNSLINGYAKNGYAEDALKIFDSMRQSHIMP), 833 to 863 (DEITFLGVLTACSHAGKVSDGRKIFEMMIGQ), and 869 to 899 (RVDHVACMVDLLGRWGYLQEADDFIEAQNLK). The interval 904–979 (LWSSLLGACR…VPGYSWIDVE (76 aa)) is type E motif. The interval 980-1010 (QRTHIFAAGDKSHSEIGKIEMFLEDLYDLMK) is type E(+) motif.

It belongs to the PPR family. PCMP-E subfamily.

It is found in the mitochondrion. This is Pentatricopeptide repeat-containing protein At3g09040, mitochondrial (PCMP-E88) from Arabidopsis thaliana (Mouse-ear cress).